A 358-amino-acid polypeptide reads, in one-letter code: Gap junction alpha-5 protein (358 aa).

Over 1–19 (MGDWSFLGEFLEEVHKHST) the chain is Cytoplasmic. Residues 20-40 (VIGKVWLTVLFIFRMLVLGTA) traverse the membrane as a helical segment. Residues 41–76 (AESSWGDEQADFRCDTIQPGCQNVCYDQAFPISHIR) are Extracellular-facing. Residues 77 to 97 (YWVLQIIFVSTPSLVYMGHAM) form a helical membrane-spanning segment. Topologically, residues 98-164 (HTVRMQEKQK…CTILIRTTME (67 aa)) are cytoplasmic. The chain crosses the membrane as a helical span at residues 165 to 185 (VAFIVGQYLLYGIFLDTLHVC). Residues 186-205 (RRSPCPHPVNCYVSRPTEKN) are Extracellular-facing. A helical transmembrane segment spans residues 206-226 (VFIVFMMAVAGLSLFLSLAEL). The Cytoplasmic portion of the chain corresponds to 227-358 (YHLGWKKIRQ…SKARSDDLSV (132 aa)). 2 disordered regions span residues 242–262 (RQGV…QSLT) and 318–358 (SQKP…DLSV). Residues S353 and S357 each carry the phosphoserine modification.

Belongs to the connexin family. Alpha-type (group II) subfamily. As to quaternary structure, a connexon is composed of a hexamer of connexins. As to expression, abundantly expressed in the lung, also expressed in the kidney and heart.

It is found in the cell membrane. It localises to the cell junction. Its subcellular location is the gap junction. Functionally, one gap junction consists of a cluster of closely packed pairs of transmembrane channels, the connexons, through which materials of low MW diffuse from one cell to a neighboring cell. The polypeptide is Gap junction alpha-5 protein (Gja5) (Mus musculus (Mouse)).